Consider the following 247-residue polypeptide: Triosephosphate isomerase (247 aa).

9 to 11 provides a ligand contact to substrate; it reads NWK. His94 serves as the catalytic Electrophile. The Proton acceptor role is filled by Glu165. Substrate contacts are provided by residues Gly171, Ser209, and 230-231; that span reads GG.

The protein belongs to the triosephosphate isomerase family. As to quaternary structure, homodimer.

It is found in the cytoplasm. It catalyses the reaction D-glyceraldehyde 3-phosphate = dihydroxyacetone phosphate. It participates in carbohydrate biosynthesis; gluconeogenesis. The protein operates within carbohydrate degradation; glycolysis; D-glyceraldehyde 3-phosphate from glycerone phosphate: step 1/1. In terms of biological role, involved in the gluconeogenesis. Catalyzes stereospecifically the conversion of dihydroxyacetone phosphate (DHAP) to D-glyceraldehyde-3-phosphate (G3P). This Albidiferax ferrireducens (strain ATCC BAA-621 / DSM 15236 / T118) (Rhodoferax ferrireducens) protein is Triosephosphate isomerase.